An 804-amino-acid polypeptide reads, in one-letter code: Chondroitin sulfate synthase mig-22 (804 aa).

Residues 1 to 6 (MVGGGR) lie on the Cytoplasmic side of the membrane. Residues 7-27 (TGIHLLLGFLIGAALALFFFS) traverse the membrane as a helical; Signal-anchor for type II membrane protein segment. Residues 28-804 (STPSIDLTSS…QLAKLLFHEK (777 aa)) lie on the Lumenal side of the membrane. 3 N-linked (GlcNAc...) asparagine glycosylation sites follow: Asn123, Asn172, and Asn268.

This sequence belongs to the chondroitin N-acetylgalactosaminyltransferase family. As to quaternary structure, interacts with sqv-5. Requires a divalent metal cation as cofactor. As to expression, expressed in seam cells, the vulval epithelium and in oocytes (at protein level).

It localises to the golgi apparatus. The protein resides in the golgi stack membrane. The catalysed reaction is 3-O-(beta-D-GlcA-(1-&gt;3)-beta-D-GalNAc-(1-&gt;4)-beta-D-GlcA-(1-&gt;3)-beta-D-Gal-(1-&gt;3)-beta-D-Gal-(1-&gt;4)-beta-D-Xyl)-L-seryl-[protein] + UDP-N-acetyl-alpha-D-galactosamine = 3-O-(beta-D-GalNAc-(1-&gt;4)-beta-D-GlcA-(1-&gt;3)-beta-D-GalNAc-(1-&gt;4)-beta-D-GlcA-(1-&gt;3)-beta-D-Gal-(1-&gt;3)-beta-D-Gal-(1-&gt;4)-beta-D-Xyl)-L-seryl-[protein] + UDP + H(+). The enzyme catalyses 3-O-{beta-D-GlcA-(1-&gt;3)-[beta-D-GalNAc-(1-&gt;4)-beta-D-GlcA-(1-&gt;3)](n)-beta-D-GalNAc-(1-&gt;4)-beta-D-GlcA-(1-&gt;3)-beta-D-Gal-(1-&gt;3)-beta-D-Gal-(1-&gt;4)-beta-D-Xyl}-L-seryl-[protein] + UDP-N-acetyl-alpha-D-galactosamine = 3-O-{[beta-D-GalNAc-(1-&gt;4)-beta-D-GlcA-(1-&gt;3)](n+1)-beta-D-GalNAc-(1-&gt;4)-beta-D-GlcA-(1-&gt;3)-beta-D-Gal-(1-&gt;3)-beta-D-Gal-(1-&gt;4)-beta-D-Xyl}-L-seryl-[protein] + UDP + H(+). It catalyses the reaction 3-O-(beta-D-GalNAc-(1-&gt;4)-beta-D-GlcA-(1-&gt;3)-beta-D-Gal-(1-&gt;3)-beta-D-Gal-(1-&gt;4)-beta-D-Xyl)-L-seryl-[protein] + UDP-alpha-D-glucuronate = 3-O-(beta-D-GlcA-(1-&gt;3)-beta-D-GalNAc-(1-&gt;4)-beta-D-GlcA-(1-&gt;3)-beta-D-Gal-(1-&gt;3)-beta-D-Gal-(1-&gt;4)-beta-D-Xyl)-L-seryl-[protein] + UDP + H(+). It carries out the reaction 3-O-{[beta-D-GalNAc-(1-&gt;4)-beta-D-GlcA-(1-&gt;3)](n)-beta-D-GalNAc-(1-&gt;4)-beta-D-GlcA-(1-&gt;3)-beta-D-Gal-(1-&gt;3)-beta-D-Gal-(1-&gt;4)-beta-D-Xyl}-L-seryl-[protein] + UDP-alpha-D-glucuronate = 3-O-{beta-D-GlcA-(1-&gt;3)-[beta-D-GalNAc-(1-&gt;4)-beta-D-GlcA-(1-&gt;3)](n)-beta-D-GalNAc-(1-&gt;4)-beta-D-GlcA-(1-&gt;3)-beta-D-Gal-(1-&gt;3)-beta-D-Gal-(1-&gt;4)-beta-D-Xyl}-L-seryl-[protein] + UDP + H(+). In terms of biological role, has both beta-1,3-glucuronic acid and beta-1,4-N-acetylgalactosamine transferase activity. Transfers glucuronic acid (GlcUA) from UDP-GlcUA and N-acetylgalactosamine (GalNAc) from UDP-GalNAc to the non-reducing end of the elongating chondroitin polymer. Required together with sqv-5 for the biosynthesis of chondroitin. Chondroitin is involved in organogenesis of the vulva, maturation of the gonad, and neural development. May have a specific role in unc-6/netrin-mediated dorsal guidance of gonadal distal tip cells. Glycosyltransferase activity is weak. This is Chondroitin sulfate synthase mig-22 (mig-22) from Caenorhabditis elegans.